The primary structure comprises 319 residues: Acetyl-coenzyme A carboxylase carboxyl transferase subunit alpha (319 aa).

The CoA carboxyltransferase C-terminal domain occupies alanine 38–glycine 292.

This sequence belongs to the AccA family. In terms of assembly, acetyl-CoA carboxylase is a heterohexamer composed of biotin carboxyl carrier protein (AccB), biotin carboxylase (AccC) and two subunits each of ACCase subunit alpha (AccA) and ACCase subunit beta (AccD).

The protein resides in the cytoplasm. The catalysed reaction is N(6)-carboxybiotinyl-L-lysyl-[protein] + acetyl-CoA = N(6)-biotinyl-L-lysyl-[protein] + malonyl-CoA. It functions in the pathway lipid metabolism; malonyl-CoA biosynthesis; malonyl-CoA from acetyl-CoA: step 1/1. Functionally, component of the acetyl coenzyme A carboxylase (ACC) complex. First, biotin carboxylase catalyzes the carboxylation of biotin on its carrier protein (BCCP) and then the CO(2) group is transferred by the carboxyltransferase to acetyl-CoA to form malonyl-CoA. This is Acetyl-coenzyme A carboxylase carboxyl transferase subunit alpha from Jannaschia sp. (strain CCS1).